The primary structure comprises 406 residues: Coenzyme A biosynthesis bifunctional protein CoaBC (406 aa).

Residues 2 to 190 (SLAGKKIVLG…SPVNDLKHLN (189 aa)) are phosphopantothenoylcysteine decarboxylase. Cysteine 158 acts as the Proton donor in catalysis. Residues 191–406 (IMITAGPTRE…VTRYDEKNRR (216 aa)) are phosphopantothenate--cysteine ligase. CTP-binding positions include 273-275 (GCA), aspartate 279, lysine 289, 308-311 (PDIV), phenylalanine 327, lysine 341, and lysine 345.

This sequence in the N-terminal section; belongs to the HFCD (homo-oligomeric flavin containing Cys decarboxylase) superfamily. In the C-terminal section; belongs to the PPC synthetase family. Mg(2+) serves as cofactor. FMN is required as a cofactor.

It catalyses the reaction N-[(R)-4-phosphopantothenoyl]-L-cysteine + H(+) = (R)-4'-phosphopantetheine + CO2. It carries out the reaction (R)-4'-phosphopantothenate + L-cysteine + CTP = N-[(R)-4-phosphopantothenoyl]-L-cysteine + CMP + diphosphate + H(+). Its pathway is cofactor biosynthesis; coenzyme A biosynthesis; CoA from (R)-pantothenate: step 2/5. It functions in the pathway cofactor biosynthesis; coenzyme A biosynthesis; CoA from (R)-pantothenate: step 3/5. Catalyzes two sequential steps in the biosynthesis of coenzyme A. In the first step cysteine is conjugated to 4'-phosphopantothenate to form 4-phosphopantothenoylcysteine. In the second step the latter compound is decarboxylated to form 4'-phosphopantotheine. The polypeptide is Coenzyme A biosynthesis bifunctional protein CoaBC (Escherichia coli O6:H1 (strain CFT073 / ATCC 700928 / UPEC)).